We begin with the raw amino-acid sequence, 455 residues long: Chromosomal replication initiator protein DnaA (455 aa).

Positions 1-73 (METSLETLWS…RDVVHEILGH (73 aa)) are domain I, interacts with DnaA modulators. The tract at residues 73–116 (HPVEIQIEIAQGDSNATISAPEVASPPPTASPVENTNTSQRQQA) is domain II. The interval 92-116 (APEVASPPPTASPVENTNTSQRQQA) is disordered. The segment covering 104–116 (PVENTNTSQRQQA) has biased composition (polar residues). Positions 117 to 333 (SLNPKYVFSR…GALIRAVAYI (217 aa)) are domain III, AAA+ region. Residues glycine 161, glycine 163, lysine 164, and threonine 165 each contribute to the ATP site. The segment at 334 to 455 (SISGLPMNVE…GDRIKLANQP (122 aa)) is domain IV, binds dsDNA.

This sequence belongs to the DnaA family. As to quaternary structure, oligomerizes as a right-handed, spiral filament on DNA at oriC.

It is found in the cytoplasm. Plays an essential role in the initiation and regulation of chromosomal replication. ATP-DnaA binds to the origin of replication (oriC) to initiate formation of the DNA replication initiation complex once per cell cycle. Binds the DnaA box (a 9 base pair repeat at the origin) and separates the double-stranded (ds)DNA. Forms a right-handed helical filament on oriC DNA; dsDNA binds to the exterior of the filament while single-stranded (ss)DNA is stabiized in the filament's interior. The ATP-DnaA-oriC complex binds and stabilizes one strand of the AT-rich DNA unwinding element (DUE), permitting loading of DNA polymerase. After initiation quickly degrades to an ADP-DnaA complex that is not apt for DNA replication. Binds acidic phospholipids. In Acaryochloris marina (strain MBIC 11017), this protein is Chromosomal replication initiator protein DnaA.